The sequence spans 147 residues: UPF0306 protein YhbP (147 aa).

This sequence belongs to the UPF0306 family.

The protein is UPF0306 protein YhbP of Salmonella paratyphi A (strain AKU_12601).